A 182-amino-acid chain; its full sequence is UPF0397 protein VS_II0189 (182 aa).

Helical transmembrane passes span 8 to 28 (VVVI…MFGV), 41 to 61 (AVLA…VGFI), 72 to 92 (WGVW…IGLF), 110 to 130 (FALF…SSAF), and 146 to 166 (QLSI…FLIL).

It belongs to the UPF0397 family.

Its subcellular location is the cell membrane. This is UPF0397 protein VS_II0189 from Vibrio atlanticus (strain LGP32) (Vibrio splendidus (strain Mel32)).